The primary structure comprises 69 residues: Cytochrome c oxidase subunit 8A, mitochondrial (69 aa).

Residues 1-25 (MSVLTSLLLRGLTGSARRLPVPRAK) constitute a mitochondrion transit peptide. Positions 2–19 (SVLTSLLLRGLTGSARRL) match the SIFI-degron motif. Over 26–36 (VHSMPPEEELG) the chain is Mitochondrial matrix. A helical transmembrane segment spans residues 37 to 60 (TLEKAIALTSCFVSLFLPAGWILS). Residues 61–69 (HLEDYKRPE) are Mitochondrial intermembrane-facing.

It belongs to the cytochrome c oxidase VIII family. Component of the cytochrome c oxidase (complex IV, CIV), a multisubunit enzyme composed of 14 subunits. The complex is composed of a catalytic core of 3 subunits MT-CO1, MT-CO2 and MT-CO3, encoded in the mitochondrial DNA, and 11 supernumerary subunits COX4I, COX5A, COX5B, COX6A, COX6B, COX6C, COX7A, COX7B, COX7C, COX8 and NDUFA4, which are encoded in the nuclear genome. The complex exists as a monomer or a dimer and forms supercomplexes (SCs) in the inner mitochondrial membrane with NADH-ubiquinone oxidoreductase (complex I, CI) and ubiquinol-cytochrome c oxidoreductase (cytochrome b-c1 complex, complex III, CIII), resulting in different assemblies (supercomplex SCI(1)III(2)IV(1) and megacomplex MCI(2)III(2)IV(2)). In response to mitochondrial stress, the precursor protein is ubiquitinated by the SIFI complex in the cytoplasm before mitochondrial import, leading to its degradation. Within the SIFI complex, UBR4 initiates ubiquitin chain that are further elongated or branched by KCMF1.

The protein resides in the mitochondrion inner membrane. It functions in the pathway energy metabolism; oxidative phosphorylation. Its function is as follows. Component of the cytochrome c oxidase, the last enzyme in the mitochondrial electron transport chain which drives oxidative phosphorylation. The respiratory chain contains 3 multisubunit complexes succinate dehydrogenase (complex II, CII), ubiquinol-cytochrome c oxidoreductase (cytochrome b-c1 complex, complex III, CIII) and cytochrome c oxidase (complex IV, CIV), that cooperate to transfer electrons derived from NADH and succinate to molecular oxygen, creating an electrochemical gradient over the inner membrane that drives transmembrane transport and the ATP synthase. Cytochrome c oxidase is the component of the respiratory chain that catalyzes the reduction of oxygen to water. Electrons originating from reduced cytochrome c in the intermembrane space (IMS) are transferred via the dinuclear copper A center (CU(A)) of subunit 2 and heme A of subunit 1 to the active site in subunit 1, a binuclear center (BNC) formed by heme A3 and copper B (CU(B)). The BNC reduces molecular oxygen to 2 water molecules using 4 electrons from cytochrome c in the IMS and 4 protons from the mitochondrial matrix. This Papio anubis (Olive baboon) protein is Cytochrome c oxidase subunit 8A, mitochondrial (COX8A).